Reading from the N-terminus, the 852-residue chain is Alanine--tRNA ligase (852 aa).

Zn(2+) contacts are provided by His-554, His-558, Cys-656, and His-660.

This sequence belongs to the class-II aminoacyl-tRNA synthetase family. Requires Zn(2+) as cofactor.

The protein localises to the cytoplasm. The catalysed reaction is tRNA(Ala) + L-alanine + ATP = L-alanyl-tRNA(Ala) + AMP + diphosphate. In terms of biological role, catalyzes the attachment of alanine to tRNA(Ala) in a two-step reaction: alanine is first activated by ATP to form Ala-AMP and then transferred to the acceptor end of tRNA(Ala). Also edits incorrectly charged Ser-tRNA(Ala) and Gly-tRNA(Ala) via its editing domain. This chain is Alanine--tRNA ligase, found in Campylobacter concisus (strain 13826).